Reading from the N-terminus, the 360-residue chain is DNA replication and repair protein RecF (360 aa).

Residue 33–40 coordinates ATP; it reads GENGSGKT.

It belongs to the RecF family.

It localises to the cytoplasm. The RecF protein is involved in DNA metabolism; it is required for DNA replication and normal SOS inducibility. RecF binds preferentially to single-stranded, linear DNA. It also seems to bind ATP. The sequence is that of DNA replication and repair protein RecF from Rickettsia peacockii (strain Rustic).